The sequence spans 353 residues: Methylthioribose-1-phosphate isomerase (353 aa).

Residues 51–53, arginine 94, and glutamine 199 each bind substrate; that span reads RGA. Aspartate 240 serves as the catalytic Proton donor. 250–251 contributes to the substrate binding site; sequence NK.

The protein belongs to the eIF-2B alpha/beta/delta subunits family. MtnA subfamily. In terms of assembly, homodimer.

It catalyses the reaction 5-(methylsulfanyl)-alpha-D-ribose 1-phosphate = 5-(methylsulfanyl)-D-ribulose 1-phosphate. Its pathway is amino-acid biosynthesis; L-methionine biosynthesis via salvage pathway; L-methionine from S-methyl-5-thio-alpha-D-ribose 1-phosphate: step 1/6. In terms of biological role, catalyzes the interconversion of methylthioribose-1-phosphate (MTR-1-P) into methylthioribulose-1-phosphate (MTRu-1-P). The protein is Methylthioribose-1-phosphate isomerase of Bacillus licheniformis (strain ATCC 14580 / DSM 13 / JCM 2505 / CCUG 7422 / NBRC 12200 / NCIMB 9375 / NCTC 10341 / NRRL NRS-1264 / Gibson 46).